The primary structure comprises 283 residues: Pantothenate synthetase (283 aa).

34-41 (MGALHDGH) serves as a coordination point for ATP. His-41 serves as the catalytic Proton donor. A (R)-pantoate-binding site is contributed by Gln-65. Gln-65 provides a ligand contact to beta-alanine. Residue 152–155 (GSKD) coordinates ATP. Gln-158 serves as a coordination point for (R)-pantoate. Residues Val-181 and 189 to 192 (MSSR) each bind ATP.

It belongs to the pantothenate synthetase family. As to quaternary structure, homodimer.

The protein resides in the cytoplasm. It catalyses the reaction (R)-pantoate + beta-alanine + ATP = (R)-pantothenate + AMP + diphosphate + H(+). It functions in the pathway cofactor biosynthesis; (R)-pantothenate biosynthesis; (R)-pantothenate from (R)-pantoate and beta-alanine: step 1/1. Its function is as follows. Catalyzes the condensation of pantoate with beta-alanine in an ATP-dependent reaction via a pantoyl-adenylate intermediate. This is Pantothenate synthetase from Rhodopseudomonas palustris (strain ATCC BAA-98 / CGA009).